We begin with the raw amino-acid sequence, 220 residues long: Ribose-5-phosphate isomerase A (220 aa).

Residues 25 to 28 (TGST), 80 to 83 (DGAD), and 93 to 96 (KGGG) contribute to the substrate site. The active-site Proton acceptor is the E102. K120 is a substrate binding site.

Belongs to the ribose 5-phosphate isomerase family. Homodimer.

It catalyses the reaction aldehydo-D-ribose 5-phosphate = D-ribulose 5-phosphate. The protein operates within carbohydrate degradation; pentose phosphate pathway; D-ribose 5-phosphate from D-ribulose 5-phosphate (non-oxidative stage): step 1/1. In terms of biological role, catalyzes the reversible conversion of ribose-5-phosphate to ribulose 5-phosphate. In Bacillus cereus (strain ATCC 10987 / NRS 248), this protein is Ribose-5-phosphate isomerase A.